A 204-amino-acid polypeptide reads, in one-letter code: Protein-L-isoaspartate O-methyltransferase (204 aa).

Belongs to the methyltransferase superfamily. L-isoaspartyl/D-aspartyl protein methyltransferase family. In terms of assembly, monomer.

The protein resides in the cytoplasm. It catalyses the reaction [protein]-L-isoaspartate + S-adenosyl-L-methionine = [protein]-L-isoaspartate alpha-methyl ester + S-adenosyl-L-homocysteine. Catalyzes the methyl esterification of L-isoaspartyl residues in peptides and proteins that result from spontaneous decomposition of normal L-aspartyl and L-asparaginyl residues. It plays a role in the repair and/or degradation of damaged proteins. In Rhizobium meliloti (strain 1021) (Ensifer meliloti), this protein is Protein-L-isoaspartate O-methyltransferase (pcm).